A 39-amino-acid polypeptide reads, in one-letter code: Cytochrome b559 subunit beta (39 aa).

A helical membrane pass occupies residues Trp14–Ser30. His18 is a heme binding site.

This sequence belongs to the PsbE/PsbF family. As to quaternary structure, heterodimer of an alpha subunit and a beta subunit. PSII is composed of 1 copy each of membrane proteins PsbA, PsbB, PsbC, PsbD, PsbE, PsbF, PsbH, PsbI, PsbJ, PsbK, PsbL, PsbM, PsbT, PsbX, PsbY, PsbZ, Psb30/Ycf12, at least 3 peripheral proteins of the oxygen-evolving complex and a large number of cofactors. It forms dimeric complexes. Requires heme b as cofactor.

Its subcellular location is the plastid. It is found in the chloroplast thylakoid membrane. In terms of biological role, this b-type cytochrome is tightly associated with the reaction center of photosystem II (PSII). PSII is a light-driven water:plastoquinone oxidoreductase that uses light energy to abstract electrons from H(2)O, generating O(2) and a proton gradient subsequently used for ATP formation. It consists of a core antenna complex that captures photons, and an electron transfer chain that converts photonic excitation into a charge separation. This Muilla maritima (Sea muilla) protein is Cytochrome b559 subunit beta.